Consider the following 127-residue polypeptide: Aspartate 1-decarboxylase (127 aa).

Catalysis depends on serine 25, which acts as the Schiff-base intermediate with substrate; via pyruvic acid. At serine 25 the chain carries Pyruvic acid (Ser). Substrate is bound at residue threonine 57. Tyrosine 58 (proton donor) is an active-site residue. 73–75 (GAA) is a substrate binding site.

The protein belongs to the PanD family. As to quaternary structure, heterooctamer of four alpha and four beta subunits. Pyruvate is required as a cofactor. In terms of processing, is synthesized initially as an inactive proenzyme, which is activated by self-cleavage at a specific serine bond to produce a beta-subunit with a hydroxyl group at its C-terminus and an alpha-subunit with a pyruvoyl group at its N-terminus.

The protein localises to the cytoplasm. It catalyses the reaction L-aspartate + H(+) = beta-alanine + CO2. The protein operates within cofactor biosynthesis; (R)-pantothenate biosynthesis; beta-alanine from L-aspartate: step 1/1. Catalyzes the pyruvoyl-dependent decarboxylation of aspartate to produce beta-alanine. This Vesicomyosocius okutanii subsp. Calyptogena okutanii (strain HA) protein is Aspartate 1-decarboxylase.